The following is an 85-amino-acid chain: Small ribosomal subunit protein uS17 (85 aa).

The protein belongs to the universal ribosomal protein uS17 family. As to quaternary structure, part of the 30S ribosomal subunit.

Its function is as follows. One of the primary rRNA binding proteins, it binds specifically to the 5'-end of 16S ribosomal RNA. The chain is Small ribosomal subunit protein uS17 from Acetivibrio thermocellus (strain ATCC 27405 / DSM 1237 / JCM 9322 / NBRC 103400 / NCIMB 10682 / NRRL B-4536 / VPI 7372) (Clostridium thermocellum).